The primary structure comprises 118 residues: Putative pterin-4-alpha-carbinolamine dehydratase (118 aa).

The protein belongs to the pterin-4-alpha-carbinolamine dehydratase family.

The catalysed reaction is (4aS,6R)-4a-hydroxy-L-erythro-5,6,7,8-tetrahydrobiopterin = (6R)-L-erythro-6,7-dihydrobiopterin + H2O. This is Putative pterin-4-alpha-carbinolamine dehydratase from Pseudomonas fluorescens (strain ATCC BAA-477 / NRRL B-23932 / Pf-5).